The sequence spans 251 residues: 1-(5-phosphoribosyl)-5-[(5-phosphoribosylamino)methylideneamino] imidazole-4-carboxamide isomerase (251 aa).

D8 functions as the Proton acceptor in the catalytic mechanism. D131 serves as the catalytic Proton donor.

The protein belongs to the HisA/HisF family.

The protein resides in the cytoplasm. The enzyme catalyses 1-(5-phospho-beta-D-ribosyl)-5-[(5-phospho-beta-D-ribosylamino)methylideneamino]imidazole-4-carboxamide = 5-[(5-phospho-1-deoxy-D-ribulos-1-ylimino)methylamino]-1-(5-phospho-beta-D-ribosyl)imidazole-4-carboxamide. The protein operates within amino-acid biosynthesis; L-histidine biosynthesis; L-histidine from 5-phospho-alpha-D-ribose 1-diphosphate: step 4/9. In Burkholderia pseudomallei (strain 1710b), this protein is 1-(5-phosphoribosyl)-5-[(5-phosphoribosylamino)methylideneamino] imidazole-4-carboxamide isomerase.